Here is a 253-residue protein sequence, read N- to C-terminus: Phycoerythrobilin:ferredoxin oxidoreductase (253 aa).

This sequence belongs to the HY2 family.

It carries out the reaction (3Z)-phycoerythrobilin + oxidized 2[4Fe-4S]-[ferredoxin] = 15,16-dihydrobiliverdin + reduced 2[4Fe-4S]-[ferredoxin] + 2 H(+). Functionally, catalyzes the two-electron reduction of the C2 and C3(1) diene system of 15,16-dihydrobiliverdin. In Prochlorococcus marinus (strain MIT 9301), this protein is Phycoerythrobilin:ferredoxin oxidoreductase.